The sequence spans 323 residues: Queuosine 5'-phosphate N-glycosylase/hydrolase (323 aa).

Queuosine 5'-phosphate contacts are provided by N72, Y93, K199, F229, D231, D298, W302, and Q306. D231 (nucleophile or transition state stabilizer) is an active-site residue.

Belongs to the QNG1 protein family. Monomer.

It carries out the reaction queuosine 5'-phosphate + H2O = queuine + D-ribose 5-phosphate. In terms of biological role, catalyzes the hydrolysis of queuosine 5'-phosphate, releasing the nucleobase queuine (q). Is likely required for salvage of queuine from exogenous queuosine (Q) that is imported and then converted to queuosine 5'-phosphate intracellularly. In vitro, can also catalyze the release of the q base directly from Q as substrate; however, Q may not be the biologically relevant substrate. Shows a very low activity on queuosine 3',5'-diphosphate, and cannot release q from queuosine 3'-phosphate and from the 5'-nucleotides AMP, UMP, CMP or GMP, indicating specificity for the queuine base. This is Queuosine 5'-phosphate N-glycosylase/hydrolase from Sphaerobacter thermophilus (strain ATCC 49802 / DSM 20745 / KCCM 41009 / NCIMB 13125 / S 6022).